Consider the following 1029-residue polypeptide: Protein phosphatase 1 regulatory subunit 12A (1029 aa).

The KVKF motif motif lies at 35-38 (KVKF). ANK repeat units follow at residues 39 to 68 (DDGA…DINY), 72 to 101 (DGLT…NINQ), 105 to 134 (EGWI…HVGA), 138 to 164 (EGDT…RQGV), 198 to 227 (SGGT…DVNI), and 231 to 260 (DGWT…DMET). Residues Asn-67 and Asn-100 each carry the (3S)-3-hydroxyasparagine; by HIF1AN modification. At Asn-226 the chain carries (3S)-3-hydroxyasparagine; by HIF1AN. Residues 290 to 786 (LHSEKRDKKS…APSSSSLSTL (497 aa)) are disordered. Residues 291–300 (HSEKRDKKSP) are compositionally biased toward basic and acidic residues. Residue Ser-299 is modified to Phosphoserine. The segment covering 302–314 (IESTANMENNQPQ) has biased composition (polar residues). Positions 318–353 (KNKETLIIEPEKNASRIESLEHEKADEEEEGKKDES) are enriched in basic and acidic residues. A compositionally biased stretch (acidic residues) spans 357–369 (SEEDEEDDSESEA). A compositionally biased stretch (low complexity) spans 385–402 (TSSTQAAPAAVTAPTLSS). 2 positions are modified to phosphoserine: Ser-422 and Ser-432. Residues 422 to 432 (SPKEEERKDES) are compositionally biased toward basic and acidic residues. A Phosphothreonine modification is found at Thr-443. At Ser-445 the chain carries Phosphoserine; by NUAK1. Tyr-446 is modified (phosphotyrosine). Low complexity predominate over residues 469–480 (RSASSPRLSSSL). Phosphoserine; by NUAK1 is present on Ser-472. The residue at position 473 (Ser-473) is a Phosphoserine; by CDK1. Ser-477 carries the post-translational modification Phosphoserine. The segment covering 481–491 (DNKEKEKDNKG) has biased composition (basic and acidic residues). A phosphoserine mark is found at Ser-507 and Ser-509. Over residues 540 to 551 (NSSINEGSTYHR) the composition is skewed to polar residues. Residues 564-578 (SCSVPSTTSTPTVTS) show a composition bias toward low complexity. Polar residues predominate over residues 585–594 (SLPSSTSTAA). The span at 596-610 (TPPGSSSAGTQSSTS) shows a compositional bias: low complexity. A phosphoserine mark is found at Ser-601 and Ser-618. Residues 614–625 (WAEDSTEKEKDS) are compositionally biased toward basic and acidic residues. Residues 626–656 (APTAVTIPVAPTVVNAAAPSTTTLTTTTAGT) are compositionally biased toward low complexity. The segment covering 671–680 (VRDEESESQR) has biased composition (basic and acidic residues). Residues 680 to 863 (RKARSRQARQ…VSFWTQDSDE (184 aa)) are interaction with ROCK2. Basic residues predominate over residues 681–691 (KARSRQARQSR). Ser-690 and Ser-693 each carry phosphoserine; by PKA and PKG; in vitro. Thr-694 is modified (phosphothreonine; by ROCK1, ROCK2, CDC42BP, ZIPK/DAPK3 and RAF1). The span at 716–765 (RTREQENEEKEKEEKEKQDKEKQEEKKESEASREDEYKQKYSRTYDETYT) shows a compositional bias: basic and acidic residues. Low complexity predominate over residues 771-786 (STSSSSAPSSSSLSTL). Ser-801 is modified (phosphoserine). The disordered stretch occupies residues 808–927 (AYSRGLAKEN…PYSSRLEKDD (120 aa)). The span at 813–839 (LAKENEREGEKKEEEKEGEDKSQPKSI) shows a compositional bias: basic and acidic residues. Over residues 840–851 (RERRRPREKRRS) the composition is skewed to basic residues. Residue Ser-851 is modified to Phosphoserine; by ROCK2. Ser-861 and Ser-870 each carry phosphoserine. The span at 866–882 (QERQSDTEDGSSKRETQ) shows a compositional bias: basic and acidic residues. Residues 883-897 (TDSVSRYDSSSTSSS) show a composition bias toward low complexity. Residues Ser-902 and Ser-907 each carry the phosphoserine modification. Phosphoserine; by NUAK1 is present on Ser-909. Basic and acidic residues predominate over residues 913-927 (LEDRKPYSSRLEKDD). Ser-994 bears the Phosphoserine mark.

In terms of assembly, PP1 comprises a catalytic subunit, PPP1CA, PPP1CB or PPP1CC, and one or several targeting or regulatory subunits. PPP1R12A mediates binding to myosin. Interacts with ARHA and CIT. Binds PPP1R12B, ROCK1 and IL16. Interacts directly with PRKG1. Non-covalent dimer of 2 dimers; PRKG1-PRKG1 and PPP1R12A-PPP1R12A. Interacts with SMTNL1. Interacts with PPP1CB; the interaction is direct. Interacts (when phosphorylated at Ser-445, Ser-472 and Ser-910) with 14-3-3. Interacts with ROCK1 and ROCK2. Interacts with isoform 1 and isoform 2 of ZIPK/DAPK3. Interacts with RAF1. Interacts with HIF1AN. Interacts with NCKAP1L. Phosphorylated by CIT (Rho-associated kinase). Phosphorylated cooperatively by ROCK1 and CDC42BP on Thr-694. Phosphorylated on upon DNA damage, probably by ATM or ATR. In vitro, phosphorylation of Ser-693 by PKA and PKG appears to prevent phosphorylation of the inhibitory site Thr-694, probably mediated by PRKG1. Phosphorylation at Ser-445, Ser-472 and Ser-909 by NUAK1 promotes interaction with 14-3-3, leading to inhibit interaction with myosin light chain MLC2, preventing dephosphorylation of MLC2. May be phosphorylated at Thr-694 by DMPK; may inhibit the myosin phosphatase activity. Phosphorylated at Ser-473 by CDK1 during mitosis, creating docking sites for the POLO box domains of PLK1. Subsequently, PLK1 binds and phosphorylates PPP1R12A. As to expression, expressed in striated and vascular smooth muscle, specificcally in type 2a fibers (at protein level). Expression levels are 20-30% higher in developed males than females (at protein level).

The protein resides in the cytoplasm. Its subcellular location is the cytoskeleton. The protein localises to the stress fiber. Key regulator of protein phosphatase 1C (PPP1C). Mediates binding to myosin. As part of the PPP1C complex, involved in dephosphorylation of PLK1. Capable of inhibiting HIF1AN-dependent suppression of HIF1A activity. The protein is Protein phosphatase 1 regulatory subunit 12A of Mus musculus (Mouse).